The following is a 321-amino-acid chain: MLRTAIRNNVQVSQKRTYIMSTIASTFLGSILFSKNNQLASKMENGELHMPKDPTLSYLNNNNSNNQAEPYFKRREPDYPGHVPLYNYEKFLMFLGSSIGSFFHPEENKYIVALGESTAIEPILKKLQKTMLSDEIGRQILKEKPRITSTSLNLDYLRSLPDNTIGKNYINWLDKEGVSPDTRVQVKYIDNEELSYIFQRYRECHDFYHAITGLPIIIEGEISVKVFEFMNIGIPMTGLGALFAPLRLKSSQRKRLREIYYPWAIKNGIYSKPLINVYWEKILEQDVDEFRKQMGIETPPDLRNMRKEYFARKKLEKQGKL.

Zn(2+) is bound by residues His205, Asp206, His209, and Glu221.

This sequence belongs to the COQ4 family. As to quaternary structure, component of a multi-subunit COQ enzyme complex, composed of at least COQ3, COQ4, COQ5, COQ6, COQ7 and COQ9. Requires Zn(2+) as cofactor.

It localises to the mitochondrion inner membrane. The catalysed reaction is a 4-hydroxy-3-methoxy-5-(all-trans-polyprenyl)benzoate + H(+) = a 2-methoxy-6-(all-trans-polyprenyl)phenol + CO2. It participates in cofactor biosynthesis; ubiquinone biosynthesis. Lyase that catalyzes the C1-decarboxylation of 4-hydroxy-3-methoxy-5-(all-trans-polyprenyl)benzoic acid into 2-methoxy-6-(all-trans-polyprenyl)phenol during ubiquinone biosynthesis. The chain is Ubiquinone biosynthesis protein COQ4, mitochondrial from Candida tropicalis (strain ATCC MYA-3404 / T1) (Yeast).